The chain runs to 245 residues: MVAVSGTQHTRTVSPTRWIVYAGSVFAGAWLATQLFYLAQIALWSFVNPGSTAFMRTDAWWLSRDKPPAQIQHQWVPYDQISRNLKRALIASEDSTFATNNGYDVDAILQAWEKNKARGRIVAGGSTITQQLARNLFLSREKSYIRKGQELIITWMLETVLDKERIFEIYLNSVEWGRGVYGAEAAARYYYRIPASRLGAWQSARLAVMLPKPRWFDAHRGSAYQAQRAAVIARRMGAAELPQSE.

The helical transmembrane segment at 20 to 42 threads the bilayer; sequence VYAGSVFAGAWLATQLFYLAQIA.

This sequence belongs to the glycosyltransferase 51 family.

It is found in the cell inner membrane. It carries out the reaction [GlcNAc-(1-&gt;4)-Mur2Ac(oyl-L-Ala-gamma-D-Glu-L-Lys-D-Ala-D-Ala)](n)-di-trans,octa-cis-undecaprenyl diphosphate + beta-D-GlcNAc-(1-&gt;4)-Mur2Ac(oyl-L-Ala-gamma-D-Glu-L-Lys-D-Ala-D-Ala)-di-trans,octa-cis-undecaprenyl diphosphate = [GlcNAc-(1-&gt;4)-Mur2Ac(oyl-L-Ala-gamma-D-Glu-L-Lys-D-Ala-D-Ala)](n+1)-di-trans,octa-cis-undecaprenyl diphosphate + di-trans,octa-cis-undecaprenyl diphosphate + H(+). It participates in cell wall biogenesis; peptidoglycan biosynthesis. Functionally, peptidoglycan polymerase that catalyzes glycan chain elongation from lipid-linked precursors. This Burkholderia lata (strain ATCC 17760 / DSM 23089 / LMG 22485 / NCIMB 9086 / R18194 / 383) protein is Biosynthetic peptidoglycan transglycosylase.